Here is a 1254-residue protein sequence, read N- to C-terminus: NPC intracellular cholesterol transporter 1 homolog 1b (1254 aa).

The first 16 residues, 1–16 (MKVIFATIWLIAGAWS), serve as a signal peptide directing secretion. Over 17-272 (QSAEQLGCIW…WKIAGLYGVT (256 aa)) the chain is Extracellular. Disulfide bonds link C24/C81, C62/C116, C82/C120, C104/C241, C107/C161, C178/C186, C231/C246, and C243/C250. N-linked (GlcNAc...) asparagine glycans are attached at residues N123 and N132. Residues 273–293 (FILALIIACALSFFIFWGAFG) traverse the membrane as a helical segment. The Cytoplasmic segment spans residues 294 to 325 (KTSAPSVCMPTLFGEFFYHGFRIWGTFCAKHP). Residues 326 to 346 (VIVLALCSWAIAGLSFGIRYM) form a helical membrane-spanning segment. The Extracellular segment spans residues 347-593 (TITTDPVELW…AIVELSEGEV (247 aa)). N389 is a glycosylation site (N-linked (GlcNAc...) asparagine). C438 and C454 form a disulfide bridge. The N-linked (GlcNAc...) asparagine glycan is linked to N479. A disulfide bridge connects residues C491 and C500. The region spanning 592 to 757 (EVSTVVISYV…ITAFVALMAI (166 aa)) is the SSD domain. The helical transmembrane segment at 594-614 (STVVISYVVMFVYVAIALGHI) threads the bilayer. At 615 to 625 (RSCRGFLRESR) the chain is on the cytoplasmic side. The helical transmembrane segment at 626-646 (IMLAIGGIVIVLASVVCSLGF) threads the bilayer. Residues 647 to 657 (WGYLDVTTTML) are Extracellular-facing. A helical membrane pass occupies residues 658 to 678 (AIEVIPFLVLAVGVDNIFIMV). Over 679–736 (HTYQRLDHSKFKTTHEAIGEAIGQVGPSILQTAGSEMACFAIGCISDMPAVKTFAMYA) the chain is Cytoplasmic. Residues 737 to 757 (AIAILLDFLLQITAFVALMAI) traverse the membrane as a helical segment. Residues 758-815 (DEKRYLDGRLDMLCCVKSGGKKINDEDGDGVDRPKEVGLLETLFKNFYSPFLLSKPVK) are Extracellular-facing. A helical membrane pass occupies residues 816-836 (VSVLLIFTVITCLSLMVTPSI). The Cytoplasmic segment spans residues 837-857 (EKGLDQEMSMPKNSHVVKYFR). The chain crosses the membrane as a helical span at residues 858-878 (YMVDLLAMGAPVYWVLKPGLN). At 879 to 1079 (YSEPLQQNLI…EQYLTIWGDA (201 aa)) the chain is on the extracellular side. C889 and C894 are joined by a disulfide. N896 and N939 each carry an N-linked (GlcNAc...) asparagine glycan. Disulfide bonds link C935–C990, C936–C958, and C946–C955. The chain crosses the membrane as a helical span at residues 1080-1100 (MFSLGMSLVAIFLVTLLITGL). The Cytoplasmic portion of the chain corresponds to 1101–1105 (DITST). The helical transmembrane segment at 1106–1126 (FIVLFMVICILINMLGMMWAW) threads the bilayer. The Extracellular portion of the chain corresponds to 1127 to 1132 (SINLNA). Residues 1133 to 1153 (ISLVNLVVCVGIGVEFVAHIV) form a helical membrane-spanning segment. Over 1154-1174 (RSFKRAEGTAQERARHSLNVT) the chain is Cytoplasmic. Residues 1175–1195 (GSSVLSGITLTKFAGIVVLGF) form a helical membrane-spanning segment. Residues 1196 to 1207 (SNSQIFQVFYFR) are Extracellular-facing. Residues 1208 to 1228 (MYLGIVLIGAAHGLILLPVLL) form a helical membrane-spanning segment. Topologically, residues 1229 to 1254 (SLLGPPQKLARSSGAEPTASITITTN) are cytoplasmic.

It belongs to the patched family. In terms of tissue distribution, expressed in the midgut.

The protein localises to the cell membrane. The catalysed reaction is cholesterol(in) = cholesterol(out). Functionally, important for cholesterol absorption at the midgut epithelium. Acts only in the early steps of sterol absorption, prior to Npc1a-dependent intracellular sterol trafficking. The protein is NPC intracellular cholesterol transporter 1 homolog 1b of Drosophila melanogaster (Fruit fly).